The following is an 881-amino-acid chain: Disks large homolog 2 (881 aa).

Disordered regions lie at residues 16-41 and 63-88; these read HRQQNRPPAVQGSQHQSHSPACMNPA and LSTTDSPHSYRYQDDDSPPPEHSFPR. 3 consecutive PDZ domains span residues 155–242, 250–337, and 424–505; these read EITL…RRRR, EIKL…GKPT, and KIVL…QYRP. An SH3 domain is found at 539-609; the sequence is KRSLYVRALF…PSKRRVERKE (71 aa). The region spanning 683–866 is the Guanylate kinase-like domain; the sequence is ARPVIILGPM…IYNQCKMVIE (184 aa). Positions 709–729 are disordered; sequence GSCVPPANSSDQEDTTRPKRD.

This sequence belongs to the MAGUK family.

It localises to the cell membrane. The protein localises to the postsynaptic density. Its subcellular location is the synapse. The protein resides in the membrane. It is found in the cell projection. It localises to the axon. The protein localises to the perikaryon. Functionally, may play a role in synapse assembly and function. The chain is Disks large homolog 2 (dlg2) from Danio rerio (Zebrafish).